Here is a 367-residue protein sequence, read N- to C-terminus: Septin-1 (367 aa).

The Septin-type G domain occupies 22 to 296 (KGFDFTLMVA…EGYRARCLQS (275 aa)). Positions 32 to 39 (GESGLGKS) are G1 motif. GTP-binding positions include 32–39 (GESGLGKS), threonine 66, glycine 92, and 171–179 (KADALMPKE). The interval 89 to 92 (DTPG) is G3 motif. Residues 170 to 173 (GKAD) are G4 motif. A Phosphoserine modification is found at serine 206. The GTP site is built by glycine 229 and arginine 245. Residue serine 248 is modified to Phosphoserine; by AURKB. Threonine 251 carries the phosphothreonine modification. Residues serine 307 and serine 315 each carry the phosphoserine; by AURKB modification.

Belongs to the TRAFAC class TrmE-Era-EngA-EngB-Septin-like GTPase superfamily. Septin GTPase family. In terms of assembly, septins polymerize into heterooligomeric protein complexes that form filaments, and can associate with cellular membranes, actin filaments and microtubules. GTPase activity is required for filament formation. Interacts with AURKB.

It is found in the cytoplasm. Its subcellular location is the cytoskeleton. The protein localises to the microtubule organizing center. It localises to the centrosome. The protein resides in the midbody. Functionally, filament-forming cytoskeletal GTPase. May play a role in cytokinesis (Potential). The polypeptide is Septin-1 (Bos taurus (Bovine)).